The following is a 64-amino-acid chain: Cold shock protein CapA (64 aa).

One can recognise a CSD domain in the interval 7-64 (GTVKWFNDEKGFGFITPQGGGDDLFVHFKAIESDGFKSLKEGQTVSFVAEKGQKGMQA).

The protein localises to the cytoplasm. Functionally, affects cell viability at low temperatures. This is Cold shock protein CapA (capA) from Pseudomonas fragi.